We begin with the raw amino-acid sequence, 3046 residues long: Nucleosome-remodeling factor subunit BPTF (3046 aa).

The interval 1–232 (MRGRRGRPPK…DIPPLEFPKS (232 aa)) is disordered. A compositionally biased stretch (pro residues) spans 22–33 (PAPPPPPPPPTS). Residues 62–72 (TRLSSPRGGSS) are compositionally biased toward low complexity. The segment covering 78–87 (PPPPPAPPST) has biased composition (pro residues). Positions 91–110 (GRGGRGGGGGRTGGGGGGGH) are enriched in gly residues. Over residues 129-186 (HESEEEEEEEDMVSEEEEEEDGDAEETQDSEDDEEDEMEEDDDDSDYPEEMEDDDDDA) the composition is skewed to acidic residues. The span at 190-203 (TESSFRSHSTYSST) shows a compositional bias: low complexity. The span at 205–215 (GRRKPRVHRPR) shows a compositional bias: basic residues. Ser-216 is subject to Phosphoserine. The region spanning 240 to 300 (NEHIMNVIAI…LKAVLREEDT (61 aa)) is the DDT domain. The segment at 390 to 437 (DDHCRVCHKLGDLLCCETCSAVYHLECVKPPLEEVPEDEWQCEVCVAH) adopts a PHD-type 1 zinc-finger fold. Basic and acidic residues-rich tracts occupy residues 567 to 609 (IDNV…SDDK) and 616 to 628 (EQGK…EVGD). The tract at residues 567 to 774 (IDNVKSPEET…GAGKGASGST (208 aa)) is disordered. A Phosphoserine modification is found at Ser-572. Positions 574-604 (EETEKDKNETENDSKDAEKNREEFEDQSLEK) form a coiled coil. Polar residues-rich tracts occupy residues 631 to 653 (NSVS…SPSE) and 690 to 705 (TCES…SIQP). The interval 640-749 (NTTNATSEET…PVSIQEEIVG (110 aa)) is interaction with KEAP1. Residues 706–723 (NLENSNSSSELNSSQSES) are compositionally biased toward low complexity. Positions 725–738 (KAADDPENGERESH) are enriched in basic and acidic residues. Residues Ser-763 and Ser-817 each carry the phosphoserine modification. Positions 839-921 (YFKLGQEGKY…QLENNIPSSF (83 aa)) are interaction with MAZ. N6-acetyllysine is present on Lys-880. Positions 978 to 1007 (MTSIEREEKEKVKKKEKKQEEEETMQQATW) form a coiled coil. Positions 1057-1157 (YRKSLEGTKN…MKTESHVNCQ (101 aa)) are disordered. Phosphothreonine is present on Thr-1064. Basic and acidic residues-rich tracts occupy residues 1087–1102 (IKIE…KGSD) and 1113–1152 (DISK…KTES). Glycyl lysine isopeptide (Lys-Gly) (interchain with G-Cter in SUMO2) cross-links involve residues Lys-1088, Lys-1138, and Lys-1209. Disordered regions lie at residues 1215 to 1339 (KGIG…GNDF), 1371 to 1448 (IVSS…FRTR), 1465 to 1537 (GEST…NGKD), and 1605 to 1706 (NSSE…GESK). Polar residues-rich tracts occupy residues 1220-1232 (TSTN…SESP), 1242-1257 (QSDS…ANND), and 1266-1285 (CSES…TTNK). Position 1231 is a phosphoserine (Ser-1231). Over residues 1287–1305 (YPKDRVLDDVSIRSPETKC) the composition is skewed to basic and acidic residues. A Phosphoserine modification is found at Ser-1300. Thr-1303 is subject to Phosphothreonine. Phosphoserine is present on Ser-1310. Low complexity predominate over residues 1372-1386 (VSSSKSALHSSVPKS). Polar residues-rich tracts occupy residues 1409–1426 (SESN…SIQD) and 1434–1444 (VQNSNESISEQ). Positions 1491–1525 (KKLEERPVNKCSDQIKLKNTTDKKNNENRESEKKG) are enriched in basic and acidic residues. Residues 1629-1656 (TLPSTKESDSTQTTTPSASCPESNSVNQ) are compositionally biased toward polar residues. Residue Lys-1730 forms a Glycyl lysine isopeptide (Lys-Gly) (interchain with G-Cter in SUMO2) linkage. 2 disordered regions span residues 1973 to 2003 (VPET…TPKQ) and 2041 to 2070 (QAKK…STIS). A coiled-coil region spans residues 2022–2050 (EIRAFAERVEKEKAQAVEQQAKKRLEQQK). Over residues 2054 to 2070 (IATSTTSPTSSTTSTIS) the composition is skewed to low complexity. Ser-2098 bears the Phosphoserine mark. Arg-2155 bears the Omega-N-methylarginine mark. The segment at 2160 to 2180 (TIRPNTSGSGGTTSNSQVITG) is disordered. An asymmetric dimethylarginine mark is found at Arg-2162, Arg-2184, and Arg-2191. Residues 2232-2256 (VSAPNTVSSTPGQKSLTSATSTSNI) show a composition bias toward polar residues. Disordered stretches follow at residues 2232-2270 (VSAP…QQGQ), 2346-2549 (TAST…RPQL), 2714-2733 (QAAK…SKQN), and 2795-2858 (PCPP…ISTT). 2 stretches are compositionally biased toward low complexity: residues 2257-2270 (QSSA…QQGQ) and 2346-2362 (TAST…AGTG). The span at 2363-2375 (EQRQSKLSPQMQV) shows a compositional bias: polar residues. Over residues 2391–2431 (PAEAQPQTAQPSAQPQPQTQPQSPAQPEVQTQPEVQTQTTV) the composition is skewed to low complexity. The segment covering 2432–2485 (SSHVPSEAQPTHAQSSKPQVAAQSQPQSNVQGQSPVRVQSPSQTRIRPSTPSQL) has biased composition (polar residues). Residue Ser-2465 is modified to Phosphoserine. A compositionally biased stretch (low complexity) spans 2486–2538 (SPGQQSQVQTTTSQPIPIQPHTSLQIPSQGQPQSQPQVQSSTQTLSSGQTLNQ). Residues 2706 to 2732 (DKIDKEEKQAAKKRKREESVEQKRSKQ) are a coiled coil. The span at 2714-2729 (QAAKKRKREESVEQKR) shows a compositional bias: basic and acidic residues. Pro residues predominate over residues 2795–2818 (PCPPVTPAPPAPPAPPPSPPPPPA). Positions 2838–2847 (KREEEKDSSS) are enriched in basic and acidic residues. The PHD-type 2 zinc finger occupies 2867-2918 (KLYCICKTPYDESKFYIGCDRCQNWYHGRCVGILQSEAELIDEYVCPQCQST). The Bromo domain maps to 2927–3031 (PLTEKDYEGL…SFFVQKLKGF (105 aa)).

This sequence belongs to the PBTF family. As to quaternary structure, interacts with MAZ. Interacts with KEAP1. Component of the NURF-1 ISWI chromatin remodeling complex (also called the nucleosome-remodeling factor (NURF) complex) at least composed of SMARCA1 (isoform 2), BPTF, RBBP4 and RBBP7. Within the complex interacts with isoform 2 of SMARCA1. Component of the BPFT-SMARCA1 complex at least composed of SMARCA1 (isoform 1), BPFT, RBBP4 and RBBP7; the complex is catalytically inactive and does not remodel chromatin. Within the complex interacts with isoform 1 of SMARCA1. Component of the NURF-5 ISWI chromatin remodeling complex at least composed of SMARCA5/SNF2H and BPTF. Within NURF-5 ISWI chromatin remodeling complex interacts with SMARCA5/SNF2H. In terms of processing, phosphorylation enhances DNA-binding. Post-translationally, highly susceptible to proteolysis. In terms of tissue distribution, ubiquitously expressed, with highest levels in testis. Present in kidney, liver and brain. In the brain, highest levels are found in motor cortex (at protein level).

The protein localises to the cytoplasm. It localises to the nucleus. Its function is as follows. Regulatory subunit of the ATP-dependent NURF-1 and NURF-5 ISWI chromatin remodeling complexes, which form ordered nucleosome arrays on chromatin and facilitate access to DNA during DNA-templated processes such as DNA replication, transcription, and repair. The NURF-1 ISWI chromatin remodeling complex has a lower ATP hydrolysis rate than the NURF-5 ISWI chromatin remodeling complex. Within the NURF-1 ISWI chromatin-remodeling complex, binds to the promoters of En1 and En2 to positively regulate their expression and promote brain development. Histone-binding protein which binds to H3 tails trimethylated on 'Lys-4' (H3K4me3), which mark transcription start sites of active genes. Binds to histone H3 tails dimethylated on 'Lys-4' (H3K4Me2) to a lesser extent. May also regulate transcription through direct binding to DNA or transcription factors. The chain is Nucleosome-remodeling factor subunit BPTF (BPTF) from Homo sapiens (Human).